Here is a 230-residue protein sequence, read N- to C-terminus: MADS-box transcription factor 50 (230 aa).

In terms of domain architecture, MADS-box spans 1–61 (MVRGKTQMKR…GKLYEFASAS (61 aa)). In terms of domain architecture, K-box spans 86-176 (IEQVKADADG…REKCKNQPPL (91 aa)). The interval 209-230 (GLPGRSRSSGGAAEDSQAMPHS) is disordered.

As to expression, expressed in mature leaves and at low levels in roots and young panicles.

The protein resides in the nucleus. Its function is as follows. Probable transcription factor active in flowering time control. May control internode elongation and promote floral transition phase. May act upstream of the floral regulators MADS1, MADS14, MADS15 and MADS18 in the floral induction pathway. The chain is MADS-box transcription factor 50 (MADS50) from Oryza sativa subsp. japonica (Rice).